The following is a 499-amino-acid chain: Catalase (499 aa).

Residues 1 to 25 (MTDRPIMTTSAGAPIPDNQNSLTAG) form a disordered region. The segment covering 7–23 (MTTSAGAPIPDNQNSLT) has biased composition (polar residues). Catalysis depends on residues His-55 and Asn-127. Tyr-337 is a binding site for heme.

It belongs to the catalase family. In terms of assembly, homotetramer. Requires heme as cofactor.

The protein localises to the periplasm. The enzyme catalyses 2 H2O2 = O2 + 2 H2O. In terms of biological role, decomposes hydrogen peroxide into water and oxygen; serves to protect cells from the toxic effects of hydrogen peroxide. The sequence is that of Catalase (katA) from Brucella abortus biovar 1 (strain 9-941).